Consider the following 231-residue polypeptide: 7-cyano-7-deazaguanine synthase (231 aa).

F8–L18 is an ATP binding site. Residues C188, C197, C200, and C203 each contribute to the Zn(2+) site.

Belongs to the QueC family. Zn(2+) serves as cofactor.

It catalyses the reaction 7-carboxy-7-deazaguanine + NH4(+) + ATP = 7-cyano-7-deazaguanine + ADP + phosphate + H2O + H(+). It participates in purine metabolism; 7-cyano-7-deazaguanine biosynthesis. In terms of biological role, catalyzes the ATP-dependent conversion of 7-carboxy-7-deazaguanine (CDG) to 7-cyano-7-deazaguanine (preQ(0)). The chain is 7-cyano-7-deazaguanine synthase from Salmonella gallinarum (strain 287/91 / NCTC 13346).